Consider the following 798-residue polypeptide: Penicillin-binding protein 1A (798 aa).

Over 1-9 (MIKKIMTTC) the chain is Cytoplasmic. The helical; Signal-anchor for type II membrane protein transmembrane segment at 10-30 (FGLVFGLCVFAVGLLAIAILA) threads the bilayer. Residues 31–798 (TYPKLPSLDS…SKRQQLDSLF (768 aa)) lie on the Periplasmic side of the membrane. The interval 50–218 (LTVYSADGKI…SAYNPIVNPE (169 aa)) is transglycosylase. The active-site Proton donor; for transglycosylase activity is Glu-88. The interval 378–700 (RRALGFAARA…GTIAVPVWVD (323 aa)) is transpeptidase. Ser-461 (acyl-ester intermediate; for transpeptidase activity) is an active-site residue. Residues 739–798 (LMLDNGGAAPQPSRRVKEDDGGAAEGGRQEADDESRQDMQETPVLPSNTDSKRQQLDSLF) are disordered. Basic and acidic residues-rich tracts occupy residues 765–777 (GRQE…RQDM) and 788–798 (DSKRQQLDSLF).

The protein in the N-terminal section; belongs to the glycosyltransferase 51 family. It in the C-terminal section; belongs to the transpeptidase family.

The protein resides in the cell inner membrane. It catalyses the reaction [GlcNAc-(1-&gt;4)-Mur2Ac(oyl-L-Ala-gamma-D-Glu-L-Lys-D-Ala-D-Ala)](n)-di-trans,octa-cis-undecaprenyl diphosphate + beta-D-GlcNAc-(1-&gt;4)-Mur2Ac(oyl-L-Ala-gamma-D-Glu-L-Lys-D-Ala-D-Ala)-di-trans,octa-cis-undecaprenyl diphosphate = [GlcNAc-(1-&gt;4)-Mur2Ac(oyl-L-Ala-gamma-D-Glu-L-Lys-D-Ala-D-Ala)](n+1)-di-trans,octa-cis-undecaprenyl diphosphate + di-trans,octa-cis-undecaprenyl diphosphate + H(+). It carries out the reaction Preferential cleavage: (Ac)2-L-Lys-D-Ala-|-D-Ala. Also transpeptidation of peptidyl-alanyl moieties that are N-acyl substituents of D-alanine.. It functions in the pathway cell wall biogenesis; peptidoglycan biosynthesis. In terms of biological role, cell wall formation. Synthesis of cross-linked peptidoglycan from the lipid intermediates. The enzyme has a penicillin-insensitive transglycosylase N-terminal domain (formation of linear glycan strands) and a penicillin-sensitive transpeptidase C-terminal domain (cross-linking of the peptide subunits). This Neisseria lactamica protein is Penicillin-binding protein 1A (mrcA).